The sequence spans 147 residues: 6-pyruvoyl tetrahydrobiopterin synthase (147 aa).

His-26 contacts Zn(2+). Catalysis depends on Cys-45, which acts as the Proton acceptor. Zn(2+)-binding residues include His-51 and His-53. Active-site charge relay system residues include His-92 and Glu-136.

This sequence belongs to the PTPS family. Homohexamer formed of two homotrimers in a head to head fashion. Zn(2+) is required as a cofactor.

The catalysed reaction is 7,8-dihydroneopterin 3'-triphosphate = 6-pyruvoyl-5,6,7,8-tetrahydropterin + triphosphate + H(+). It functions in the pathway cofactor biosynthesis; tetrahydrobiopterin biosynthesis; tetrahydrobiopterin from 7,8-dihydroneopterin triphosphate: step 1/3. Functionally, involved in the biosynthesis of tetrahydrobiopterin, an essential cofactor of aromatic amino acid hydroxylases. Catalyzes the transformation of 7,8-dihydroneopterin triphosphate into 6-pyruvoyl tetrahydropterin. In Poecilia reticulata (Guppy), this protein is 6-pyruvoyl tetrahydrobiopterin synthase (pts).